Consider the following 553-residue polypeptide: Solute carrier family 45 member 3 (553 aa).

11 helical membrane passes run 19 to 39, 52 to 72, 88 to 108, 120 to 140, 161 to 181, 198 to 218, 275 to 295, 323 to 343, 353 to 373, 382 to 402, and 522 to 542; these read LLIN…ITYV, FMTM…PLLG, FIWA…RAGW, LELA…QVCF, YSVY…LPAI, CLFG…LLVA, FVAE…YTDF, MGSL…LVMD, AVYL…CLSH, AALT…LASL, and AYMV…TQVV.

Belongs to the glycoside-pentoside-hexuronide (GPH) cation symporter transporter (TC 2.A.2) family.

Its subcellular location is the membrane. It catalyses the reaction sucrose(out) + H(+)(out) = sucrose(in) + H(+)(in). Proton-associated sucrose transporter. May be able to transport also glucose and fructose. In Macaca fascicularis (Crab-eating macaque), this protein is Solute carrier family 45 member 3 (SLC45A3).